The sequence spans 509 residues: Zinc finger protein CKR1 (509 aa).

Residues 1-61 form the KRAB domain; that stretch reads MEPYVLLDPR…GSEEPQTHPP (61 aa). 2 stretches are compositionally biased toward basic and acidic residues: residues 41–50 and 98–112; these read EDAVGLKEDA and PKRD…RDRP. Residues 41–114 are disordered; sequence EDAVGLKEDA…PSRVRDRPFG (74 aa). 11 consecutive C2H2-type zinc fingers follow at residues 113 to 135, 141 to 163, 169 to 191, 197 to 219, 225 to 247, 279 to 303, 303 to 325, 331 to 353, 359 to 383, 387 to 409, and 415 to 437; these read FGCP…RRVH, YSCP…RRTH, HKCQ…SRGH, HRCG…RRVH, YECP…RRSH, QRCA…ERSH, FPCG…GKTH, YKCG…GHAA, and FTCG…RRVH. Residues 428–479 form a disordered region; it reads SHLTKHRRSHGPKAPLLPVQGRGEAGEPLRASPLSSGAEQRDGRRAQRGGVE.

Belongs to the krueppel C2H2-type zinc-finger protein family.

It localises to the nucleus. The sequence is that of Zinc finger protein CKR1 from Gallus gallus (Chicken).